The following is a 243-amino-acid chain: Aliphatic sulfonates import ATP-binding protein SsuB (243 aa).

An ABC transporter domain is found at 11–230 (ATVRGLRKSY…RTHPSFASYT (220 aa)). Position 43–50 (43–50 (GRSGSGKS)) interacts with ATP.

This sequence belongs to the ABC transporter superfamily. Aliphatic sulfonates importer (TC 3.A.1.17.2) family. In terms of assembly, the complex is composed of two ATP-binding proteins (SsuB), two transmembrane proteins (SsuC) and a solute-binding protein (SsuA).

The protein resides in the cell membrane. The catalysed reaction is ATP + H2O + aliphatic sulfonate-[sulfonate-binding protein]Side 1 = ADP + phosphate + aliphatic sulfonateSide 2 + [sulfonate-binding protein]Side 1.. Its function is as follows. Part of the ABC transporter complex SsuABC involved in aliphatic sulfonates import. Responsible for energy coupling to the transport system. Is also involved in taurine transport. Seems to not be involved in long chain aliphatic sulfonates transport (chain length of eight carbon atoms or more). This chain is Aliphatic sulfonates import ATP-binding protein SsuB, found in Corynebacterium glutamicum (strain ATCC 13032 / DSM 20300 / JCM 1318 / BCRC 11384 / CCUG 27702 / LMG 3730 / NBRC 12168 / NCIMB 10025 / NRRL B-2784 / 534).